Reading from the N-terminus, the 983-residue chain is Nitrate reductase [NADPH] (983 aa).

2 stretches are compositionally biased toward low complexity: residues 1–14 and 26–48; these read MTIS…SSKT and SSSS…SSPT. The disordered stretch occupies residues 1–50; that stretch reads MTISTTSSSTSSKTSSEKGDDLKGFSSSSSPASSRSSSATTPEPSSPTVL. Mo-molybdopterin is bound at residue C184. A Cytochrome b5 heme-binding domain is found at 585-662; that stretch reads DTIITAADLA…LRDFHLGRLE (78 aa). 2 residues coordinate heme: H622 and H645. An FAD-binding FR-type domain is found at 688 to 815; that stretch reads KKWRATRLVS…KGPLGSFTYL (128 aa). Residues 746–749, 763–767, F768, F780, 784–786, S841, and T844 each bind FAD; these read RAYT, LIKVY, and KMT. 952–961 serves as a coordination point for NADP(+); it reads LALVCGPPPM.

The protein belongs to the nitrate reductase family. As to quaternary structure, homodimer. FAD serves as cofactor. Heme is required as a cofactor. Requires Mo-molybdopterin as cofactor.

The enzyme catalyses nitrite + NADP(+) + H2O = nitrate + NADPH + H(+). It functions in the pathway nitrogen metabolism; nitrate reduction (assimilation). Functionally, nitrate reductase is a key enzyme involved in the first step of nitrate assimilation in plants, fungi and bacteria. In Mycosarcoma maydis (Corn smut fungus), this protein is Nitrate reductase [NADPH] (NAR1).